The sequence spans 582 residues: MESVKQRILAPGKEGLKNFAGKSLGQIYRVLEKKQDTGETIELTEDGKPLEVPERKAPLCDCTCFGLPRRYIIAIMSGLGFCISFGIRCNLGVAIVDMVNNSTIHRGGKVIKEKAKFNWDPETVGMIHGSFFWGYIITQIPGGYIASRLAANRVFGAAILLTSTLNMLIPSAARVHYGCVIFVRILQGLVEGVTYPACHGIWSKWAPPLERSRLATTSFCGSYAGAVIAMPLAGILVQYTGWSSVFYVYGSFGMVWYMFWLLVSYESPAKHPTITDEERRYIEESIGESANLLGAMEKFKTPWRKFFTSMPVYAIIVANFCRSWTFYLLLISQPAYFEEVFGFEISKVGMLSAVPHLVMTIIVPIGGQIADFLRSKQILSTTTVRKIMNCGGFGMEATLLLVVGYSHTRGVAISFLVLAVGFSGFAISGFNVNHLDIAPRYASILMGISNGVGTLSGMVCPIIVGAMTKNKSREEWQYVFLIAALVHYGGVIFYAIFASGEKQPWADPEETSEEKCGFIHEDELDEETGDITQNYINYGTTKSYGATTQANGGWPSGWEKKEEFVQGEVQDSHSYKDRVDYS.

Residues 1–71 lie on the Cytoplasmic side of the membrane; sequence MESVKQRILA…CTCFGLPRRY (71 aa). Residues 72 to 92 traverse the membrane as a helical segment; the sequence is IIAIMSGLGFCISFGIRCNLG. The Vesicular segment spans residues 93-125; it reads VAIVDMVNNSTIHRGGKVIKEKAKFNWDPETVG. 2 N-linked (GlcNAc...) asparagine glycosylation sites follow: Asn100 and Asn101. A helical membrane pass occupies residues 126 to 146; that stretch reads MIHGSFFWGYIITQIPGGYIA. Residues 147–148 lie on the Cytoplasmic side of the membrane; that stretch reads SR. The chain crosses the membrane as a helical span at residues 149 to 169; that stretch reads LAANRVFGAAILLTSTLNMLI. Residues 170–177 are Vesicular-facing; that stretch reads PSAARVHY. The helical transmembrane segment at 178 to 198 threads the bilayer; the sequence is GCVIFVRILQGLVEGVTYPAC. The Cytoplasmic segment spans residues 199–216; sequence HGIWSKWAPPLERSRLAT. A helical transmembrane segment spans residues 217 to 237; it reads TSFCGSYAGAVIAMPLAGILV. At 238-244 the chain is on the vesicular side; it reads QYTGWSS. A helical membrane pass occupies residues 245-265; it reads VFYVYGSFGMVWYMFWLLVSY. The Cytoplasmic segment spans residues 266–310; that stretch reads ESPAKHPTITDEERRYIEESIGESANLLGAMEKFKTPWRKFFTSM. Residues 311-331 form a helical membrane-spanning segment; the sequence is PVYAIIVANFCRSWTFYLLLI. Over 332-349 the chain is Vesicular; sequence SQPAYFEEVFGFEISKVG. The helical transmembrane segment at 350-370 threads the bilayer; sequence MLSAVPHLVMTIIVPIGGQIA. Residues 371–386 lie on the Cytoplasmic side of the membrane; the sequence is DFLRSKQILSTTTVRK. The chain crosses the membrane as a helical span at residues 387–407; that stretch reads IMNCGGFGMEATLLLVVGYSH. The Vesicular portion of the chain corresponds to 408 to 409; sequence TR. Residues 410–430 traverse the membrane as a helical segment; it reads GVAISFLVLAVGFSGFAISGF. Topologically, residues 431-443 are cytoplasmic; sequence NVNHLDIAPRYAS. The chain crosses the membrane as a helical span at residues 444-464; the sequence is ILMGISNGVGTLSGMVCPIIV. Over 465 to 477 the chain is Vesicular; the sequence is GAMTKNKSREEWQ. N-linked (GlcNAc...) asparagine glycosylation is present at Asn470. Residues 478 to 498 form a helical membrane-spanning segment; the sequence is YVFLIAALVHYGGVIFYAIFA. The Cytoplasmic portion of the chain corresponds to 499–582; the sequence is SGEKQPWADP…HSYKDRVDYS (84 aa).

Belongs to the major facilitator superfamily. Sodium/anion cotransporter family. VGLUT subfamily. In terms of tissue distribution, predominantly expressed in adult brain. Expressed in amygdala, caudate nucleus, cerebral cortex, frontal lobe, hippocampus, medulla, occipital lobe, putamen, spinal cord, substantia nigra, subthalamic nucleus, temporal lobe and thalamus.

It is found in the cytoplasmic vesicle. The protein resides in the secretory vesicle. It localises to the synaptic vesicle membrane. Its subcellular location is the synapse. The protein localises to the synaptosome. It is found in the cell membrane. It catalyses the reaction L-glutamate(out) = L-glutamate(in). The catalysed reaction is 3 Na(+)(out) + phosphate(out) = 3 Na(+)(in) + phosphate(in). It carries out the reaction phosphate(in) = phosphate(out). The enzyme catalyses K(+)(in) + H(+)(out) = K(+)(out) + H(+)(in). It catalyses the reaction chloride(in) = chloride(out). With respect to regulation, chloride channel activity is allosterically activated by lumenal H(+) and Cl(-) leading to synaptic vesicles acidification. The L-glutamate transport activity is allosterically activated by lumenal H(+) and Cl(-). The allosteric requirement for H(+) efficiently prevents non-vesicular efflux across the plasma membrane. The L-glutamate uniporter activity exhibits a biphasic dependence on chloride concentration. In terms of biological role, multifunctional transporter that transports L-glutamate as well as multiple ions such as chloride, proton, potassium, sodium and phosphate. At the synaptic vesicle membrane, mainly functions as a uniporter which transports preferentially L-glutamate but also, phosphate from the cytoplasm into synaptic vesicles at presynaptic nerve terminals of excitatory neural cells. The L-glutamate or phosphate uniporter activity is electrogenic and is driven by the proton electrochemical gradient, mainly by the electrical gradient established by the vacuolar H(+)-ATPase across the synaptic vesicle membrane. In addition, functions as a chloride channel that allows the chloride permeation through the synaptic vesicle membrane therefore affects the proton electrochemical gradient and promotes synaptic vesicles acidification. Moreover, functions as a vesicular K(+)/H(+) antiport allowing to maintain the electrical gradient and to decrease chemical gradient and therefore sustain vesicular glutamate uptake. The vesicular H(+)/H(+) antiport activity is electroneutral. At the plasma membrane, following exocytosis, functions as a symporter of Na(+) and phosphate from the extracellular space to the cytoplasm allowing synaptic phosphate homeostasis regulation. The symporter activity is driven by an inside negative membrane potential and is electrogenic. Also involved in the regulation of retinal hyaloid vessel regression during postnatal development. May also play a role in the endocrine glutamatergic system of other tissues such as pineal gland and pancreas. In Homo sapiens (Human), this protein is Vesicular glutamate transporter 2.